A 559-amino-acid chain; its full sequence is Spermidine/putrescine import ATP-binding protein PotA (559 aa).

The region spanning 7-448 (IEIEGLNKTF…PKTEWIANFI (442 aa)) is the ABC transporter domain. 40–47 (GPSGCGKT) is a binding site for ATP. The insert stretch occupies residues 108-317 (WTKLDEIPKL…EAFEKRYLSR (210 aa)).

Belongs to the ABC transporter superfamily. Spermidine/putrescine importer (TC 3.A.1.11.1) family. In terms of assembly, the complex is composed of two ATP-binding proteins (PotA), two transmembrane proteins (PotB and PotC) and a solute-binding protein (PotD).

Its subcellular location is the cell membrane. It catalyses the reaction ATP + H2O + polyamine-[polyamine-binding protein]Side 1 = ADP + phosphate + polyamineSide 2 + [polyamine-binding protein]Side 1.. In terms of biological role, part of the ABC transporter complex PotABCD involved in spermidine/putrescine import. Responsible for energy coupling to the transport system. This Mycoplasma genitalium (strain ATCC 33530 / DSM 19775 / NCTC 10195 / G37) (Mycoplasmoides genitalium) protein is Spermidine/putrescine import ATP-binding protein PotA.